The sequence spans 143 residues: Large ribosomal subunit protein uL11 (143 aa).

This sequence belongs to the universal ribosomal protein uL11 family. In terms of assembly, part of the ribosomal stalk of the 50S ribosomal subunit. Interacts with L10 and the large rRNA to form the base of the stalk. L10 forms an elongated spine to which L12 dimers bind in a sequential fashion forming a multimeric L10(L12)X complex. Post-translationally, one or more lysine residues are methylated.

Forms part of the ribosomal stalk which helps the ribosome interact with GTP-bound translation factors. This is Large ribosomal subunit protein uL11 from Variovorax paradoxus (strain S110).